The chain runs to 62 residues: Venom peptide 6 (62 aa).

The N-terminal stretch at 1–26 (MKSTSVFILFAGIAIMACLQMTGTEA) is a signal peptide. AXPX repeat units lie at residues 26 to 29 (AAPS), 30 to 33 (ASPN), and 40 to 43 (ADPD). Residues 27–46 (APSASPNPTPVARADPDPEA) constitute a propeptide that is removed on maturation.

This sequence belongs to the MCD family. Expressed by the venom gland.

It localises to the secreted. The protein resides in the target cell membrane. Antimicrobial peptide with strong activity against the fungus B.cinerea (MIC=5 uM) and the Gram-positive bacterium S.aureus (MIC=50 uM), and no activity against C.albicans (MIC&gt;200 uM), and the Gram-negative bacterium E.coli (MIC&gt;200 uM). Shows cytolytic activity against insect cell lines. Has no hemolytic activity against human erythrocytes. In vivo, peptide injection in the vicinity of the head and thorax of lepidopteran larvae induces feeding disorder that lasts one or two days before recovering. The sequence is that of Venom peptide 6 from Eumenes pomiformis (Potter wasp).